A 251-amino-acid polypeptide reads, in one-letter code: Fibroblast growth factor 23 (251 aa).

The N-terminal stretch at 1-24 is a signal peptide; it reads MLGARLRLWVCALCSVCSMSVLRA. Cysteines 95 and 113 form a disulfide. O-linked (GalNAc) threonine glycans are attached at residues Thr171 and Thr178. The tract at residues 172-221 is disordered; it reads PIPRRHTRSAEDDSERDPLNVLKPRARMTPAPASCSQELPSAEDNSPMAS. Ser180 carries the phosphoserine; by FAM20C modification. Over residues 205–219 the composition is skewed to polar residues; it reads SCSQELPSAEDNSPM.

This sequence belongs to the heparin-binding growth factors family. In terms of assembly, interacts with FGFR1, FGFR2, FGFR3 and FGFR4. Affinity between fibroblast growth factors (FGFs) and their receptors is increased by KL and heparan sulfate glycosaminoglycans that function as coreceptors. Post-translationally, following secretion this protein is inactivated by cleavage into a N-terminal fragment and a C-terminal fragment. The processing is effected by proprotein convertases. In terms of processing, O-glycosylated at Thr-171 and Thr-178 by GALNT3 and glycosylation of Thr-178 requires previous glycosylation at Thr171. Glycosylation is necessary for secretion; it blocks processing by proprotein convertases when the O-glycan is alpha 2,6-sialylated. Competition between proprotein convertase cleavage and block of cleavage by O-glycosylation determines the level of secreted active FGF23. Phosphorylation at Ser-180 mediated by FAM20C slows down glycosylation at Thr-178 notably. In terms of tissue distribution, expressed in osteogenic cells particularly during phases of active bone remodeling. In adult trabecular bone, expressed in osteocytes and flattened bone-lining cells (inactive osteoblasts).

It is found in the secreted. Functionally, regulator of phosphate homeostasis. Inhibits renal tubular phosphate transport by reducing SLC34A1 levels. Up-regulates EGR1 expression in the presence of KL. Acts directly on the parathyroid to decrease PTH secretion. Regulator of vitamin-D metabolism. Negatively regulates osteoblast differentiation and matrix mineralization. The protein is Fibroblast growth factor 23 (FGF23) of Homo sapiens (Human).